The primary structure comprises 1138 residues: Pesticidal crystal protein Cry7Ab (1138 aa).

The protein belongs to the delta endotoxin family.

Promotes colloidosmotic lysis by binding to the midgut epithelial cells of Coleoptera. This is Pesticidal crystal protein Cry7Ab (cry7Ab) from Bacillus thuringiensis serovar kumamotoensis.